We begin with the raw amino-acid sequence, 86 residues long: UPF0335 protein mll3968 (86 aa).

Belongs to the UPF0335 family.

This is UPF0335 protein mll3968 from Mesorhizobium japonicum (strain LMG 29417 / CECT 9101 / MAFF 303099) (Mesorhizobium loti (strain MAFF 303099)).